The primary structure comprises 132 residues: Histone H2A (132 aa).

Residues 1–13 are compositionally biased toward basic residues; it reads MSAKGKTGRKKAS. Positions 1-21 are disordered; it reads MSAKGKTGRKKASKGTSNSAK.

The protein belongs to the histone H2A family. As to quaternary structure, the nucleosome is a histone octamer containing two molecules each of H2A, H2B, H3 and H4 assembled in one H3-H4 heterotetramer and two H2A-H2B heterodimers. The octamer wraps approximately 147 bp of DNA.

The protein localises to the nucleus. It is found in the chromosome. Its function is as follows. Core component of nucleosome. Nucleosomes wrap and compact DNA into chromatin, limiting DNA accessibility to the cellular machineries which require DNA as a template. Histones thereby play a central role in transcription regulation, DNA repair, DNA replication and chromosomal stability. DNA accessibility is regulated via a complex set of post-translational modifications of histones, also called histone code, and nucleosome remodeling. This is Histone H2A from Plasmodium falciparum.